Consider the following 196-residue polypeptide: Nucleoside triphosphate pyrophosphatase (196 aa).

The Proton acceptor role is filled by D70.

It belongs to the Maf family. A divalent metal cation serves as cofactor.

The protein localises to the cytoplasm. The catalysed reaction is a ribonucleoside 5'-triphosphate + H2O = a ribonucleoside 5'-phosphate + diphosphate + H(+). It carries out the reaction a 2'-deoxyribonucleoside 5'-triphosphate + H2O = a 2'-deoxyribonucleoside 5'-phosphate + diphosphate + H(+). Functionally, nucleoside triphosphate pyrophosphatase. May have a dual role in cell division arrest and in preventing the incorporation of modified nucleotides into cellular nucleic acids. This Gloeothece citriformis (strain PCC 7424) (Cyanothece sp. (strain PCC 7424)) protein is Nucleoside triphosphate pyrophosphatase.